The sequence spans 985 residues: Invasin (985 aa).

The interval S494 to K594 is D1. Topologically, residues S494–I985 are extracellular. Big-1 domains are found at residues T503–K594 and K601–T691. The interval G595–P694 is D2. The D3 stretch occupies residues I695–V794. Residues P795 to N886 are D4. An integrin-binding region spans residues P795 to I985. A D5 region spans residues R887–I985. Cysteines 906 and 981 form a disulfide.

The protein belongs to the intimin/invasin family.

It localises to the cell surface. Invasin is a protein that allows enteric bacteria to penetrate cultured mammalian cells. The entry of invasin in the cell is mediated by binding several beta-1 chain integrins. This Yersinia pseudotuberculosis serotype I (strain IP32953) protein is Invasin.